We begin with the raw amino-acid sequence, 308 residues long: uncharacterized protein (308 aa).

The first 18 residues, 1 to 18 (MKIILLFLAALASFTVHA), serve as a signal peptide directing secretion.

This is an uncharacterized protein from Escherichia coli (strain K12).